The sequence spans 235 residues: Phosphatidylserine decarboxylase proenzyme (235 aa).

The Schiff-base intermediate with substrate; via pyruvic acid role is filled by Ser-204. The residue at position 204 (Ser-204) is a Pyruvic acid (Ser); by autocatalysis.

This sequence belongs to the phosphatidylserine decarboxylase family. PSD-A subfamily. In terms of assembly, heterodimer of a large membrane-associated beta subunit and a small pyruvoyl-containing alpha subunit. Pyruvate is required as a cofactor. Is synthesized initially as an inactive proenzyme. Formation of the active enzyme involves a self-maturation process in which the active site pyruvoyl group is generated from an internal serine residue via an autocatalytic post-translational modification. Two non-identical subunits are generated from the proenzyme in this reaction, and the pyruvate is formed at the N-terminus of the alpha chain, which is derived from the carboxyl end of the proenzyme. The post-translation cleavage follows an unusual pathway, termed non-hydrolytic serinolysis, in which the side chain hydroxyl group of the serine supplies its oxygen atom to form the C-terminus of the beta chain, while the remainder of the serine residue undergoes an oxidative deamination to produce ammonia and the pyruvoyl prosthetic group on the alpha chain.

The protein resides in the cell membrane. It catalyses the reaction a 1,2-diacyl-sn-glycero-3-phospho-L-serine + H(+) = a 1,2-diacyl-sn-glycero-3-phosphoethanolamine + CO2. Its pathway is phospholipid metabolism; phosphatidylethanolamine biosynthesis; phosphatidylethanolamine from CDP-diacylglycerol: step 2/2. Its function is as follows. Catalyzes the formation of phosphatidylethanolamine (PtdEtn) from phosphatidylserine (PtdSer). This Mycobacterium sp. (strain KMS) protein is Phosphatidylserine decarboxylase proenzyme.